Consider the following 383-residue polypeptide: Probable lipid transporter atnI (383 aa).

Helical transmembrane passes span 46 to 66 (VLFSVLFGLTTIIHIVQAIMF) and 71 to 91 (AWVVIMSSLWELIAFIMRSLF). Residue asparagine 94 is glycosylated (N-linked (GlcNAc...) asparagine). 5 helical membrane-spanning segments follow: residues 104–124 (FTIFFLLAPIWVNAFLYMTLG), 144–164 (FGHIFVWLEILAFIIQLVGAA), 182–202 (IYMGGIGVQELFILIFTGLFI), 231–251 (WLFYAIYASLFLITVRIIFRL), and 269–289 (WFEYVWDAAPIFICLAILNVA). Residues 305–383 (VSRKEKKQRK…YDNRGNEVRP (79 aa)) are disordered. Residues 307–316 (RKEKKQRKRE) show a composition bias toward basic residues. The segment covering 317-329 (KKEAKIAEKEAKK) has biased composition (basic and acidic residues).

The protein belongs to the lipid-translocating exporter (LTE) (TC 9.A.26.1) family.

The protein resides in the membrane. The protein operates within secondary metabolite biosynthesis. In terms of biological role, probable lipid transporter; part of the gene cluster that mediates the biosynthesis of aspercryptins, linear lipopeptides built from six amino acids including 2 highly unusual and nonproteogenic amino acids, 2-amino-octanoic acid (2aoa) and 2-amino-dodecanol (2adol). The core structure of aspercryptins is as follows: Ser/Ala-Thr-Ile/Val-2aoa-Asn-2adol. The first step of aspercryptin biosynthesis is the generation of the fatty acid precursors, octanoic and dodecanoic acids, by the FAS subunits atnF and atnM. The fatty acid precursors are likely transformed into the corresponding alpha-amino fatty acids in three steps. First, they are hydroxylated by the cytochrome P450 monooxygenase atnE, then oxidized to the corresponding alpha-keto acids by the NAD(P)-dependent oxidoreductase atnD, and finally converted to the alpha-amino fatty acids by the PLP-dependent aminotransferases atnH or atnJ. the alpha-amino fatty acids, 2-amino-octanoic and 2-amino-dodecanoic acids, are recognized, activated, and covalently tethered to the NRPS atnA by its fourth and sixth adenylation domains. The second module of atnA is the Thr module and contains an epimerase (E) domain responsible for the epimerization of Thr to D-allo-Thr. Additionally, despite atnA having only one epimerase domain, the first amino acid of aspercryptin A1 is D-Ser, suggesting that serine is either loaded directly as D-Ser on the first module or that the epimerase domain in the threonine module epimerizes both L-Ser and L-Thr. After condensation of the hexapeptide of aspercryptin, the C-terminal reductase (TE) domain might be involved in the reductive release and production of the aldehyde hexapeptide. Further reduction would generate aspercryptins. The variety of aspercryptins produced reflects the flexibility of the atnA NRPS, allowing incorporation of alanine instead of serine, valine for isoleucine, and a C10 fatty amino alcohol instead of the C12 version. AtnB seems to be involved in the selectivity for Ile versus Val by the third module. Moreover, type B, C and D aspercryptins have an additional N-terminal cichorine, acetyl and propionyl group respectively. In Emericella nidulans (strain FGSC A4 / ATCC 38163 / CBS 112.46 / NRRL 194 / M139) (Aspergillus nidulans), this protein is Probable lipid transporter atnI.